The primary structure comprises 101 residues: Small ubiquitin-related modifier 1 (101 aa).

The Ubiquitin-like domain maps to 20-97 (EYIKLKVIGQ…IEVYQEQTGG (78 aa)). Residue glycine 97 forms a Glycyl lysine isopeptide (Gly-Lys) (interchain with K-? in acceptor proteins) linkage. The propeptide occupies 98 to 101 (HSTV).

Belongs to the ubiquitin family. SUMO subfamily. In terms of assembly, interacts with SAE2, UBE2I, RANBP2, PIAS1 and PIAS2. Covalently attached to a number of proteins. Post-translationally, cleavage of precursor form by a sentrin-specific protease is necessary for function.

It is found in the nucleus membrane. The protein localises to the nucleus speckle. It localises to the cytoplasm. Its subcellular location is the nucleus. The protein resides in the PML body. It is found in the cell membrane. In terms of biological role, ubiquitin-like protein that can be covalently attached to proteins as a monomer or a lysine-linked polymer. Covalent attachment via an isopeptide bond to its substrates requires prior activation by the E1 complex SAE1-SAE2 and linkage to the E2 enzyme UBE2I. This post-translational modification on lysine residues of proteins plays a crucial role in a number of cellular processes such as nuclear transport, DNA replication and repair, mitosis and signal transduction. Polymeric SUMO1 chains are also susceptible to polyubiquitination which functions as a signal for proteasomal degradation of modified proteins. The protein is Small ubiquitin-related modifier 1 (SUMO1) of Gallus gallus (Chicken).